The chain runs to 204 residues: Cold and drought-regulated protein CORA (204 aa).

A run of 18 repeats spans residues 54 to 59 (YNHGGG), 65 to 70 (YNHGGG), 71 to 76 (YNHGGG), 78 to 83 (YHNGGG), 85 to 90 (YNHGGG), 98 to 100 (HGG), 101 to 103 (HGG), 112 to 114 (HGG), 115 to 117 (HGG), 126 to 128 (HGG), 129 to 131 (HGG), 164 to 169 (YNHGGG), 171 to 176 (YNHGGG), 178 to 180 (HGG), 181 to 183 (HGG), 184 to 186 (HGG), 187 to 189 (HGG), and 190 to 192 (HGG). The interval 54–176 (YNHGGGYNGG…GGGGYNHGGG (123 aa)) is 7 X 6 AA repeats of Y-N-H-G-G-G. Residues 98-192 (HGGHGGGGYN…GHGGHGGHGG (95 aa)) are 11 X 3 AA repeats of H-G-G. Gly residues predominate over residues 169-194 (GGYNHGGGGHGGHGGHGGHGGHGGHG). The segment at 169 to 204 (GGYNHGGGGHGGHGGHGGHGGHGGHGAVQTEDNTQN) is disordered.

It belongs to the GRP family.

May be involved in resistance of the plant to environmental stress. The protein is Cold and drought-regulated protein CORA (CORA) of Medicago sativa (Alfalfa).